Reading from the N-terminus, the 845-residue chain is Beta-mannosidase B (845 aa).

N-linked (GlcNAc...) asparagine glycosylation is present at asparagine 252. Glutamate 432 (proton donor) is an active-site residue. 2 N-linked (GlcNAc...) asparagine glycosylation sites follow: asparagine 717 and asparagine 723.

Belongs to the glycosyl hydrolase 2 family. Beta-mannosidase B subfamily.

The enzyme catalyses Hydrolysis of terminal, non-reducing beta-D-mannose residues in beta-D-mannosides.. Its pathway is glycan metabolism; N-glycan degradation. Functionally, exoglycosidase that cleaves the single beta-linked mannose residue from the non-reducing end of beta-mannosidic oligosaccharides of various complexity and length. Prefers mannobiose over mannotriose and has no activity against polymeric mannan. Is also severely restricted by galactosyl substitutions at the +1 subsite. This chain is Beta-mannosidase B (mndB), found in Aspergillus fumigatus (strain CBS 144.89 / FGSC A1163 / CEA10) (Neosartorya fumigata).